Here is a 151-residue protein sequence, read N- to C-terminus: MQIWVDADACPKAVKEILFKTAMRREVKLTLVANQYMNIPTSPFIDTIKVGAGFDVADNEIVKLCNAGDLVITADIPLADKIVEKGATGLNPRGELYTEDNIKGILSMRNLMEELRSAGTVSGGPAAFSPKDKQNFTNQLDKFLTRSLNRI.

It belongs to the UPF0178 family.

The protein is UPF0178 protein Desal_2673 of Maridesulfovibrio salexigens (strain ATCC 14822 / DSM 2638 / NCIMB 8403 / VKM B-1763) (Desulfovibrio salexigens).